A 370-amino-acid chain; its full sequence is tRNA-specific 2-thiouridylase MnmA (370 aa).

Residues 9-16 (GLSGGVDS) and Met35 contribute to the ATP site. Positions 95-97 (NPD) are interaction with target base in tRNA. The active-site Nucleophile is Cys100. A disulfide bridge links Cys100 with Cys198. Gly124 lines the ATP pocket. An interaction with tRNA region spans residues 148–150 (KDQ). Cys198 serves as the catalytic Cysteine persulfide intermediate. The interaction with tRNA stretch occupies residues 316-317 (RY).

It belongs to the MnmA/TRMU family.

The protein resides in the cytoplasm. It catalyses the reaction S-sulfanyl-L-cysteinyl-[protein] + uridine(34) in tRNA + AH2 + ATP = 2-thiouridine(34) in tRNA + L-cysteinyl-[protein] + A + AMP + diphosphate + H(+). In terms of biological role, catalyzes the 2-thiolation of uridine at the wobble position (U34) of tRNA, leading to the formation of s(2)U34. The chain is tRNA-specific 2-thiouridylase MnmA from Acidovorax ebreus (strain TPSY) (Diaphorobacter sp. (strain TPSY)).